The primary structure comprises 488 residues: uncharacterized protein (488 aa).

27 to 38 (IVHFGFGAFHRA) lines the NAD(+) pocket.

The protein belongs to the mannitol dehydrogenase family. UxuB subfamily.

This is an uncharacterized protein from Escherichia coli (strain K12).